The chain runs to 633 residues: Threonine--tRNA ligase (633 aa).

The 61-residue stretch at 1-61 folds into the TGS domain; that stretch reads MINVYFSDNS…TEDCKFEVIT (61 aa). The tract at residues 242-533 is catalytic; sequence DHRKIGKELE…LIEHHSGKLP (292 aa). Zn(2+) contacts are provided by Cys-333, His-384, and His-510.

It belongs to the class-II aminoacyl-tRNA synthetase family. In terms of assembly, homodimer. Zn(2+) is required as a cofactor.

Its subcellular location is the cytoplasm. It catalyses the reaction tRNA(Thr) + L-threonine + ATP = L-threonyl-tRNA(Thr) + AMP + diphosphate + H(+). Functionally, catalyzes the attachment of threonine to tRNA(Thr) in a two-step reaction: L-threonine is first activated by ATP to form Thr-AMP and then transferred to the acceptor end of tRNA(Thr). Also edits incorrectly charged L-seryl-tRNA(Thr). The sequence is that of Threonine--tRNA ligase from Ehrlichia ruminantium (strain Gardel).